A 250-amino-acid polypeptide reads, in one-letter code: Acetylglutamate kinase (250 aa).

Residues 41–42, Arg-63, and Asn-156 contribute to the substrate site; that span reads GG.

It belongs to the acetylglutamate kinase family. ArgB subfamily.

The protein localises to the cytoplasm. The enzyme catalyses N-acetyl-L-glutamate + ATP = N-acetyl-L-glutamyl 5-phosphate + ADP. It functions in the pathway amino-acid biosynthesis; L-arginine biosynthesis; N(2)-acetyl-L-ornithine from L-glutamate: step 2/4. Its function is as follows. Catalyzes the ATP-dependent phosphorylation of N-acetyl-L-glutamate. In Listeria welshimeri serovar 6b (strain ATCC 35897 / DSM 20650 / CCUG 15529 / CIP 8149 / NCTC 11857 / SLCC 5334 / V8), this protein is Acetylglutamate kinase.